The primary structure comprises 572 residues: Proline--tRNA ligase (572 aa).

This sequence belongs to the class-II aminoacyl-tRNA synthetase family. ProS type 1 subfamily. As to quaternary structure, homodimer.

Its subcellular location is the cytoplasm. It carries out the reaction tRNA(Pro) + L-proline + ATP = L-prolyl-tRNA(Pro) + AMP + diphosphate. Its function is as follows. Catalyzes the attachment of proline to tRNA(Pro) in a two-step reaction: proline is first activated by ATP to form Pro-AMP and then transferred to the acceptor end of tRNA(Pro). As ProRS can inadvertently accommodate and process non-cognate amino acids such as alanine and cysteine, to avoid such errors it has two additional distinct editing activities against alanine. One activity is designated as 'pretransfer' editing and involves the tRNA(Pro)-independent hydrolysis of activated Ala-AMP. The other activity is designated 'posttransfer' editing and involves deacylation of mischarged Ala-tRNA(Pro). The misacylated Cys-tRNA(Pro) is not edited by ProRS. The polypeptide is Proline--tRNA ligase (Hydrogenovibrio crunogenus (strain DSM 25203 / XCL-2) (Thiomicrospira crunogena)).